A 353-amino-acid polypeptide reads, in one-letter code: S-adenosylmethionine:tRNA ribosyltransferase-isomerase (353 aa).

Belongs to the QueA family. Monomer.

It is found in the cytoplasm. It carries out the reaction 7-aminomethyl-7-carbaguanosine(34) in tRNA + S-adenosyl-L-methionine = epoxyqueuosine(34) in tRNA + adenine + L-methionine + 2 H(+). It participates in tRNA modification; tRNA-queuosine biosynthesis. Functionally, transfers and isomerizes the ribose moiety from AdoMet to the 7-aminomethyl group of 7-deazaguanine (preQ1-tRNA) to give epoxyqueuosine (oQ-tRNA). In Dinoroseobacter shibae (strain DSM 16493 / NCIMB 14021 / DFL 12), this protein is S-adenosylmethionine:tRNA ribosyltransferase-isomerase.